The chain runs to 213 residues: Ras-related protein Rab-39B (213 aa).

Positions 17, 20, 21, 22, 23, 37, and 40 each coordinate GTP. S22 serves as a coordination point for Mg(2+). The switch-I stretch occupies residues 35-43; sequence QVSDPTVGV. Mg(2+)-binding residues include T40 and D64. 6 residues coordinate GTP: G67, H123, K124, D126, A154, and R155. Residues 67–83 are switch-II; that stretch reads GQERFRSITRAYYRNSV. S201 carries the phosphoserine modification. 2 S-geranylgeranyl cysteine lipidation sites follow: C211 and C213. Position 213 is a cysteine methyl ester (C213).

It belongs to the small GTPase superfamily. Rab family. As to quaternary structure, interacts (GDP-bound) with C9orf72; C9orf72 in complex with SMCR8 acts as a GEF for RAB39B. Interacts (in GTP-bound form) with PICK1 (via PDZ domain); a PICK1 homodimer may allow simultaneous association of RAB39B and GRIA2 to PICK1 which is involved in GRIA2 trafficking. Interacts with isoform c of RASSF1; the interaction is strong. Interacts with isoform a of RASSF1; the interaction is weak. Interacts with the DLG4/PSD-95. Interacts (GTP-bound) with HOPS complex components VPS39 and VPS41. Requires Mg(2+) as cofactor. In terms of tissue distribution, highly expressed in the brain.

The protein localises to the cell membrane. The protein resides in the cytoplasmic vesicle membrane. It is found in the golgi apparatus. It localises to the cytoplasmic vesicle. Its subcellular location is the autophagosome membrane. The protein localises to the autolysosome membrane. The enzyme catalyses GTP + H2O = GDP + phosphate + H(+). Its activity is regulated as follows. Regulated by guanine nucleotide exchange factors (GEFs) including C9orf72-SMCR8 complex, which promote the exchange of bound GDP for free GTP. Regulated by GTPase activating proteins (GAPs) which increase the GTP hydrolysis activity. Inhibited by GDP dissociation inhibitors (GDIs). In terms of biological role, the small GTPases Rab are key regulators of intracellular membrane trafficking, from the formation of transport vesicles to their fusion with membranes. Rabs cycle between an inactive GDP-bound form and an active GTP-bound form that is able to recruit to membranes different sets of downstream effectors directly responsible for vesicle formation, movement, tethering and fusion. RAB39B is involved in autophagy and may function in autophagosome formation. Binds downstream effector PICK1 to ensure selectively GRIA2 exit from the endoplasmic reticulum to the Golgi and to regulate AMPAR composition at the post-synapses and thus synaptic transmission. May regulate the homeostasis of SNCA/alpha-synuclein. The sequence is that of Ras-related protein Rab-39B from Homo sapiens (Human).